We begin with the raw amino-acid sequence, 495 residues long: Ectonucleoside triphosphate diphosphohydrolase 8 (495 aa).

Over 1 to 8 (MGLTWKQR) the chain is Cytoplasmic. A helical membrane pass occupies residues 9–29 (VFTALLGAAAVSGLTALLLVL). Topologically, residues 30–466 (VGTMNVLLPP…PAQGWAQSFG (437 aa)) are extracellular. An intrachain disulfide couples C78 to C102. E168 acts as the Proton acceptor in catalysis. Cysteines 246 and 292 form a disulfide. Residues N303 and N324 are each glycosylated (N-linked (GlcNAc...) asparagine). Disulfide bonds link C328–C334 and C380–C403. Residues 467-487 (VWAAGVVFVVLTLAATLGAVA) form a helical membrane-spanning segment. Residues 488-495 (VQVFWLQD) lie on the Cytoplasmic side of the membrane.

This sequence belongs to the GDA1/CD39 NTPase family. It depends on Ca(2+) as a cofactor. Requires Mg(2+) as cofactor. In terms of processing, N-glycosylated.

It is found in the cell membrane. It catalyses the reaction a ribonucleoside 5'-triphosphate + 2 H2O = a ribonucleoside 5'-phosphate + 2 phosphate + 2 H(+). In terms of biological role, canalicular ectonucleoside NTPDase responsible for the main hepatic NTPDase activity. Ectonucleoside NTPDases catalyze the hydrolysis of gamma- and beta-phosphate residues of nucleotides, playing a central role in concentration of extracellular nucleotides. Has activity toward ATP, ADP, UTP and UDP, but not toward AMP. The polypeptide is Ectonucleoside triphosphate diphosphohydrolase 8 (ENTPD8) (Bos taurus (Bovine)).